We begin with the raw amino-acid sequence, 231 residues long: Large ribosomal subunit protein uL1 (231 aa).

It belongs to the universal ribosomal protein uL1 family. In terms of assembly, part of the 50S ribosomal subunit.

Functionally, binds directly to 23S rRNA. The L1 stalk is quite mobile in the ribosome, and is involved in E site tRNA release. Protein L1 is also a translational repressor protein, it controls the translation of the L11 operon by binding to its mRNA. The chain is Large ribosomal subunit protein uL1 from Pseudomonas syringae pv. tomato (strain ATCC BAA-871 / DC3000).